We begin with the raw amino-acid sequence, 211 residues long: SAGA-associated factor 11 homolog (211 aa).

The segment at 115 to 136 (CTCPHCDRLVAAARFAPHLEKC) adopts an SGF11-type zinc-finger fold. Residues 153 to 211 (TKEGASASSSSTSTYIQSGGNTGGTDDEDDVDWSSDKRKKKSTQNSRNNGSKKNNGKIF) are disordered. Low complexity predominate over residues 157-166 (ASASSSSTST). Residue S187 is modified to Phosphoserine. Residues 197–211 (NSRNNGSKKNNGKIF) show a composition bias toward low complexity.

This sequence belongs to the SGF11 family. As to quaternary structure, component of some SAGA transcription coactivator-HAT complexes, at least composed of Ada2b, not/nonstop, Pcaf/Gcn5, Sgf11 and Spt3. Within the SAGA complex, Sgf11, e(y)2, and not/nonstop form an additional subcomplex of SAGA called the DUB module (deubiquitination module). Interacts directly with not/nonstop. Interacts with the AMEX complex component xmas-2. Interacts with Cbp80; important for promoter recruitment of Sgf11 that is not associated with the DUB module.

The protein resides in the nucleus. Its subcellular location is the nucleoplasm. It is found in the cytoplasm. In terms of biological role, component of the transcription regulatory histone acetylation (HAT) complex SAGA, a multiprotein complex that activates transcription by remodeling chromatin and mediating histone acetylation and deubiquitination. Within the SAGA complex, participates in a subcomplex that specifically deubiquitinates histone H2B. The SAGA complex is recruited to specific gene promoters by activators, where it is required for transcription. Required for nuclear receptor-mediated transactivation. Binds independently on SAGA to promoters in an RNA-dependent manner. Binds to mRNA and is essential for total mRNA export from the nucleus. Required to counteract heterochromatin silencing. Controls the development of neuronal connectivity in visual system by being required for accurate axon targeting in the optic lobe. Required for expression of ecdysone-induced genes such as br/broad. The sequence is that of SAGA-associated factor 11 homolog from Drosophila mojavensis (Fruit fly).